The sequence spans 497 residues: Xylooligosaccharide oxidase (497 aa).

The first 16 residues, 1–16 (MHLLPLTVSATAVVSA), serve as a signal peptide directing secretion. C30 and C79 are joined by a disulfide. N-linked (GlcNAc...) asparagine glycosylation is found at N42 and N117. In terms of domain architecture, FAD-binding PCMH-type spans 57–230 (LPYTPAAIAK…ASFRFKTFAA (174 aa)). Residues 94–155 (HSYASFGLGG…GKRAFSHGTC (62 aa)) constitute a cross-link (6-(S-cysteinyl)-8alpha-(pros-histidyl)-FAD (His-Cys)). Residue T154 coordinates substrate. 3 N-linked (GlcNAc...) asparagine glycosylation sites follow: N192, N233, and N245. Residue R272 participates in substrate binding. N-linked (GlcNAc...) asparagine glycosylation is found at N289 and N307. Residues E412 and Y451 each coordinate substrate.

This sequence belongs to the oxygen-dependent FAD-linked oxidoreductase family. It depends on FAD as a cofactor. The FAD cofactor is bound via a bicovalent 6-S-cysteinyl, 8alpha-N1-histidyl FAD linkage.

It is found in the secreted. The catalysed reaction is D-xylobiose + O2 = D-xylobiono-1,5-lactone + H2O2. It carries out the reaction D-xylotriose + O2 = D-xylotriono-1,5-lactone + H2O2. The enzyme catalyses D-xylotetraose + O2 = D-xylotetraono-1,5-lactone + H2O2. In terms of biological role, catalyzes the selective oxidation of C1 hydroxyl moieties on mono-, oligo- and polysaccharides with concomitant reduction of molecular oxygen to hydrogen peroxide. This results in the formation of the corresponding lactones, which typically undergo spontaneous hydrolysis. Xylooligosaccharide oxidase is able to oxidize a variety of substrates including D-xylose, D-cellobiose, lactose and arabinose. The enzyme acts primarily on xylooligosaccharides, indicating that it prefers pentose-based oligosaccharides over hexose-based oligosaccharides. This Thermothelomyces thermophilus (strain ATCC 42464 / BCRC 31852 / DSM 1799) (Sporotrichum thermophile) protein is Xylooligosaccharide oxidase.